The following is a 209-amino-acid chain: MTKGILGRKIGMTQVFAENGDLIPVTVIEAAPNVVLQKKTAENDGYEAIQLGFDDKREKLSNKPEKGHVAKAETAPKRFVKELRGVDMDAYEIGQEVKVEIFSAGEIVDVTGVSKGKGFQGAIKRHGQSRGPMSHGSRYHRRPGSMGPVDPNRVFKGKLLPGRMGGDQITVQNLEIVKVDAERNLLLIKGNVPGARKTLITVKSAVKSK.

The segment at A122 to P151 is disordered.

It belongs to the universal ribosomal protein uL3 family. As to quaternary structure, part of the 50S ribosomal subunit. Forms a cluster with proteins L14 and L19.

Its function is as follows. One of the primary rRNA binding proteins, it binds directly near the 3'-end of the 23S rRNA, where it nucleates assembly of the 50S subunit. The protein is Large ribosomal subunit protein uL3 of Bacillus velezensis (strain DSM 23117 / BGSC 10A6 / LMG 26770 / FZB42) (Bacillus amyloliquefaciens subsp. plantarum).